We begin with the raw amino-acid sequence, 191 residues long: Imidazoleglycerol-phosphate dehydratase (191 aa).

Belongs to the imidazoleglycerol-phosphate dehydratase family.

It localises to the cytoplasm. The catalysed reaction is D-erythro-1-(imidazol-4-yl)glycerol 3-phosphate = 3-(imidazol-4-yl)-2-oxopropyl phosphate + H2O. Its pathway is amino-acid biosynthesis; L-histidine biosynthesis; L-histidine from 5-phospho-alpha-D-ribose 1-diphosphate: step 6/9. This chain is Imidazoleglycerol-phosphate dehydratase, found in Methanosarcina barkeri (strain Fusaro / DSM 804).